The chain runs to 695 residues: Polyribonucleotide nucleotidyltransferase (695 aa).

Asp488 and Asp494 together coordinate Mg(2+). Residues 554-613 (PKTTIIKIKTDKIRDLIGRGGETIKGIISTSCASIDVDDSGNVNIFSNNQKSFDTAVQMV) form the KH domain. One can recognise an S1 motif domain in the interval 623 to 690 (NKVYTGKVVK…DRGRIKLSRK (68 aa)).

It belongs to the polyribonucleotide nucleotidyltransferase family. Component of the RNA degradosome, which is a multiprotein complex involved in RNA processing and mRNA degradation. It depends on Mg(2+) as a cofactor.

It localises to the cytoplasm. It catalyses the reaction RNA(n+1) + phosphate = RNA(n) + a ribonucleoside 5'-diphosphate. Functionally, involved in mRNA degradation. Catalyzes the phosphorolysis of single-stranded polyribonucleotides processively in the 3'- to 5'-direction. The chain is Polyribonucleotide nucleotidyltransferase from Vesicomyosocius okutanii subsp. Calyptogena okutanii (strain HA).